We begin with the raw amino-acid sequence, 733 residues long: MAEAETHPPIGESQTEPAESGCPMRIKPPVEGGSNRDWWPNAVNLKILQKNPPAIDPSDEGYDSEAVKSLDVEAFQRDFDELLTNSQDWWPADFGHYGPLFVRMSWHAAGTYRVEDGRGGGGRGMQPFAPLNSWPDNVSLDKARRLLWPLKKKYGKQISWSDLIVYSGNRAMEHMGFKTAGFAFGRPDYWEPEEDIYWGAEAEWLGSQDRYAGANGDRTKLENPPXXPHMGLIYVNPEGPEGNPDYLAAAIDIRETFGRMAMNDIETAALIVGGHTFGKTHGATDIENGVEPEXXPLEQMGLGWANPGLGNDTVSSGLEVTWTQHPTKWDNSFLEILYSNEWELTKSPAGANQWKPKDNGWANSWPMAQGTGKTHPSMLTTDLSMRFDPIYGEITRRWLDHPEELAEEYAKAWFKLIHRDMGPVTRYLGPLVPKQTWLWQDIIPAGKQLSDADVATLKAAIADSGLSIQQLVNTAWKAAASYRSSDMRGGNGGRIRLQPQLGWEVNEPEELAPVIAKLEEIQAASDSGVSFADLVVLGGVVGLEKAIKAAGFDVAVPFTSGPRDALQEQTDVDSFAYLEPKGDGFRNFVAKGDSVPAEYRLIDRANLLGLSAPQMTVLIGGLRVLGANHGGSELGVLTDKVGQLTNDYFVNLTDMGTKWAPAPADDGTYVGTDRATGSPKWTASRVDLLFGSNSQLRALAEVYAEDDSKEKFVKDFVAAWTKVMNADRFDLEA.

The interval 1–35 (MAEAETHPPIGESQTEPAESGCPMRIKPPVEGGSN) is disordered. Residues 106-234 (WHAAGTYRVE…PXXPHMGLIY (129 aa)) constitute a cross-link (tryptophyl-tyrosyl-methioninium (Trp-Tyr) (with M-260)). H107 functions as the Proton acceptor in the catalytic mechanism. The segment at residues 234-260 (YVNPEGPEGNPDYLAAAIDIRETFGRM) is a cross-link (tryptophyl-tyrosyl-methioninium (Tyr-Met) (with W-106)). Heme is bound at residue H275.

The protein belongs to the peroxidase family. Peroxidase/catalase subfamily. As to quaternary structure, homodimer or homotetramer. The cofactor is heme b. Formation of the three residue Trp-Tyr-Met cross-link is important for the catalase, but not the peroxidase activity of the enzyme.

The catalysed reaction is H2O2 + AH2 = A + 2 H2O. It catalyses the reaction 2 H2O2 = O2 + 2 H2O. Bifunctional enzyme with both catalase and broad-spectrum peroxidase activity. May play a role in the intracellular survival of mycobacteria. In Mycolicibacterium fortuitum (Mycobacterium fortuitum), this protein is Catalase-peroxidase 2.